A 156-amino-acid polypeptide reads, in one-letter code: Ribosomal RNA large subunit methyltransferase H (156 aa).

Residues leucine 73, glycine 104, and 123 to 128 (LSPLTL) contribute to the S-adenosyl-L-methionine site.

This sequence belongs to the RNA methyltransferase RlmH family. In terms of assembly, homodimer.

The protein localises to the cytoplasm. It carries out the reaction pseudouridine(1915) in 23S rRNA + S-adenosyl-L-methionine = N(3)-methylpseudouridine(1915) in 23S rRNA + S-adenosyl-L-homocysteine + H(+). Specifically methylates the pseudouridine at position 1915 (m3Psi1915) in 23S rRNA. This chain is Ribosomal RNA large subunit methyltransferase H, found in Yersinia enterocolitica serotype O:8 / biotype 1B (strain NCTC 13174 / 8081).